Here is a 91-residue protein sequence, read N- to C-terminus: Probable Fe(2+)-trafficking protein (91 aa).

The protein belongs to the Fe(2+)-trafficking protein family.

Its function is as follows. Could be a mediator in iron transactions between iron acquisition and iron-requiring processes, such as synthesis and/or repair of Fe-S clusters in biosynthetic enzymes. The sequence is that of Probable Fe(2+)-trafficking protein from Burkholderia multivorans (strain ATCC 17616 / 249).